We begin with the raw amino-acid sequence, 295 residues long: Protoheme IX farnesyltransferase (295 aa).

9 consecutive transmembrane segments (helical) span residues 7–27 (VTKP…FLLA), 34–54 (VPLF…GCVF), 78–98 (LIAP…GIAL), 106–126 (LAAL…SLYM), 131–151 (VYGT…GYCA), 161–181 (LILL…IAIF), 207–227 (ITLY…GGYA), 228–248 (GYKY…MALS), and 263–283 (LFMF…VDFQ).

This sequence belongs to the UbiA prenyltransferase family. Protoheme IX farnesyltransferase subfamily.

It is found in the cell inner membrane. It carries out the reaction heme b + (2E,6E)-farnesyl diphosphate + H2O = Fe(II)-heme o + diphosphate. The protein operates within porphyrin-containing compound metabolism; heme O biosynthesis; heme O from protoheme: step 1/1. In terms of biological role, converts heme B (protoheme IX) to heme O by substitution of the vinyl group on carbon 2 of heme B porphyrin ring with a hydroxyethyl farnesyl side group. The chain is Protoheme IX farnesyltransferase from Aeromonas salmonicida (strain A449).